The chain runs to 320 residues: MASAKATMGQGEQDHFVLKSGHAMPAVGLGTWRAGSDTAHSVRTAITEAGYRHVDTAAEYGVEKEVGKGLKAAMEAGIDRKDLFVTSKIWCTNLAPERVRPALENTLKDLQLDYIDLYHIHWPFRLKDGAHMPPEAGEVLEFDMEGVWKEMENLVKDGLVKDIGVCNYTVTKLNRLLRSAKIPPAVCQMEMHPGWKNDKIFEACKKHGIHVTAYSPLGSSEKNLAHDPVVEKVANKLNKTPGQVLIKWALQRGTSVIPKSSKDERIKENIQVFGWEIPEEDFKVLCSIKDEKRVLTGEELFVNKTHGPYRSAADVWDHEN.

Tyrosine 60 acts as the Proton donor in catalysis. Histidine 121 is a substrate binding site. 215-269 (SPLGSSEKNLAHDPVVEKVANKLNKTPGQVLIKWALQRGTSVIPKSSKDERIKEN) contacts NADP(+).

The protein belongs to the aldo/keto reductase family.

The catalysed reaction is an alditol + NAD(+) = an aldose + NADH + H(+). It carries out the reaction an alditol + NADP(+) = an aldose + NADPH + H(+). The sequence is that of Aldose reductase from Hordeum vulgare (Barley).